The chain runs to 309 residues: Intron-encoded DNA endonuclease ai2a (309 aa).

The protein belongs to the LAGLIDADG endonuclease family.

The protein resides in the mitochondrion. Its function is as follows. Mitochondrial DNA endonuclease involved in intron homing. Cleaves only one strand of intronless DNA sequence at the site which coincides with the I-SceII cleavage recognition site. This Dictyostelium discoideum (Social amoeba) protein is Intron-encoded DNA endonuclease ai2a (ai2a).